The sequence spans 412 residues: Cysteate synthase (412 aa).

Position 105 is an N6-(pyridoxal phosphate)lysine (K105). N131 and T382 together coordinate pyridoxal 5'-phosphate.

It belongs to the threonine synthase family. Cysteate synthase subfamily. As to quaternary structure, homotrimer. Requires pyridoxal 5'-phosphate as cofactor.

The catalysed reaction is O-phospho-L-serine + sulfite + H(+) = L-cysteate + phosphate. It participates in cofactor biosynthesis; coenzyme M biosynthesis. Functionally, specifically catalyzes the beta-elimination of phosphate from L-phosphoserine and the beta-addition of sulfite to the dehydroalanine intermediate to produce L-cysteate. This is Cysteate synthase from Methanocorpusculum labreanum (strain ATCC 43576 / DSM 4855 / Z).